The primary structure comprises 225 residues: Rho GDP-dissociation inhibitor 3 (225 aa).

This sequence belongs to the Rho GDI family.

The protein localises to the cytoplasm. Inhibits GDP/GTP exchange reaction of RhoB. Interacts specifically with the GDP- and GTP-bound forms of post-translationally processed Rhob and Rhog proteins, both of which show a growth-regulated expression in mammalian cells. Stimulates the release of the GDP-bound but not the GTP-bound RhoB protein. Also inhibits the GDP/GTP exchange of RhoB but shows less ability to inhibit the dissociation of prebound GTP. In Bos taurus (Bovine), this protein is Rho GDP-dissociation inhibitor 3 (ARHGDIG).